The chain runs to 258 residues: Phycoerythrobilin:ferredoxin oxidoreductase (258 aa).

This sequence belongs to the HY2 family.

The enzyme catalyses (3Z)-phycoerythrobilin + oxidized 2[4Fe-4S]-[ferredoxin] = 15,16-dihydrobiliverdin + reduced 2[4Fe-4S]-[ferredoxin] + 2 H(+). Its function is as follows. Catalyzes the two-electron reduction of the C2 and C3(1) diene system of 15,16-dihydrobiliverdin. This chain is Phycoerythrobilin:ferredoxin oxidoreductase, found in Prochlorococcus marinus (strain NATL2A).